A 72-amino-acid chain; its full sequence is Translation initiation factor IF-1 (72 aa).

The 72-residue stretch at 1-72 folds into the S1-like domain; the sequence is MSKEEVLEFS…TKGRITYRYK (72 aa).

It belongs to the IF-1 family. In terms of assembly, component of the 30S ribosomal translation pre-initiation complex which assembles on the 30S ribosome in the order IF-2 and IF-3, IF-1 and N-formylmethionyl-tRNA(fMet); mRNA recruitment can occur at any time during PIC assembly.

The protein localises to the cytoplasm. Its function is as follows. One of the essential components for the initiation of protein synthesis. Stabilizes the binding of IF-2 and IF-3 on the 30S subunit to which N-formylmethionyl-tRNA(fMet) subsequently binds. Helps modulate mRNA selection, yielding the 30S pre-initiation complex (PIC). Upon addition of the 50S ribosomal subunit IF-1, IF-2 and IF-3 are released leaving the mature 70S translation initiation complex. The sequence is that of Translation initiation factor IF-1 from Bartonella tribocorum (strain CIP 105476 / IBS 506).